The following is a 255-amino-acid chain: 2-dehydro-3,6-dideoxy-6-sulfogluconate aldolase (255 aa).

Histidine 38 acts as the Proton acceptor in catalysis. The a divalent metal cation site is built by glutamate 141 and aspartate 167.

It belongs to the HpcH/HpaI aldolase family. In terms of assembly, homohexamer; trimer of dimers. The cofactor is a divalent metal cation.

The enzyme catalyses 2-dehydro-3,6-dideoxy-6-sulfo-D-gluconate = (2S)-3-sulfolactaldehyde + pyruvate. In terms of biological role, catalyzes the retro-aldol cleavage of 2-dehydro-3,6-dideoxy-6-sulfo-D-gluconate to (2S)-3-sulfolactaldehyde and pyruvate. Is involved in a degradation pathway of sulfoquinovose (SQ) that allows P.putida SQ1 to use SQ as the sole carbon and energy source for growth. The polypeptide is 2-dehydro-3,6-dideoxy-6-sulfogluconate aldolase (Pseudomonas putida (Arthrobacter siderocapsulatus)).